The primary structure comprises 147 residues: 3-dehydroquinate dehydratase (147 aa).

Tyrosine 24 acts as the Proton acceptor in catalysis. Residues asparagine 75, histidine 81, and aspartate 88 each contribute to the substrate site. The active-site Proton donor is histidine 101. Residues 102-103 and arginine 112 each bind substrate; that span reads IS.

Belongs to the type-II 3-dehydroquinase family. In terms of assembly, homododecamer.

The catalysed reaction is 3-dehydroquinate = 3-dehydroshikimate + H2O. The protein operates within metabolic intermediate biosynthesis; chorismate biosynthesis; chorismate from D-erythrose 4-phosphate and phosphoenolpyruvate: step 3/7. Its function is as follows. Catalyzes a trans-dehydration via an enolate intermediate. The protein is 3-dehydroquinate dehydratase of Cereibacter sphaeroides (strain ATCC 17029 / ATH 2.4.9) (Rhodobacter sphaeroides).